Consider the following 323-residue polypeptide: GILT-like protein C02D5.2 (323 aa).

Residues 13-32 (LICRPILTFSSLHILTAFLI) traverse the membrane as a helical segment. An N-linked (GlcNAc...) asparagine glycan is attached at asparagine 35. Transmembrane regions (helical) follow at residues 37 to 59 (SYIN…HRFL) and 87 to 104 (YIYG…YRSL). N-linked (GlcNAc...) asparagine glycosylation occurs at asparagine 289.

It belongs to the GILT family.

The protein localises to the membrane. The protein is GILT-like protein C02D5.2 of Caenorhabditis elegans.